The following is a 502-amino-acid chain: ATP synthase subunit alpha (502 aa).

169–176 is a binding site for ATP; sequence GDRQTGKT.

The protein belongs to the ATPase alpha/beta chains family. As to quaternary structure, F-type ATPases have 2 components, CF(1) - the catalytic core - and CF(0) - the membrane proton channel. CF(1) has five subunits: alpha(3), beta(3), gamma(1), delta(1), epsilon(1). CF(0) has three main subunits: a(1), b(2) and c(9-12). The alpha and beta chains form an alternating ring which encloses part of the gamma chain. CF(1) is attached to CF(0) by a central stalk formed by the gamma and epsilon chains, while a peripheral stalk is formed by the delta and b chains. The F(1)F(0) complex interacts with SpoIIIJ and YqjG; YqgA is found in the same complex.

It localises to the cell membrane. The protein localises to the membrane raft. It catalyses the reaction ATP + H2O + 4 H(+)(in) = ADP + phosphate + 5 H(+)(out). Functionally, produces ATP from ADP in the presence of a proton gradient across the membrane. The alpha chain is a regulatory subunit. The polypeptide is ATP synthase subunit alpha (Bacillus subtilis (strain 168)).